Consider the following 829-residue polypeptide: Cadherin-16 (829 aa).

The signal sequence occupies residues 1–18; the sequence is MVPAWLWLLCFSVPQALV. Residues 19–786 are Extracellular-facing; that stretch reads EVSPTTLHVE…MKGMPTKLSA (768 aa). 6 Cadherin domains span residues 25-126, 131-235, 242-336, 341-449, 455-564, and 569-665; these read LHVE…VPQF, YSAR…SIVE, EPVH…APVC, PPVS…APEF, GPVS…PPRL, and YEAD…APAL. N-linked (GlcNAc...) asparagine glycosylation is found at N517, N602, and N722. Positions 666–786 are ectodomain G; the sequence is PLAPMPSRHL…MKGMPTKLSA (121 aa). A helical membrane pass occupies residues 787–807; it reads VGILVGTLAAIGFFLILIFTH. The Cytoplasmic segment spans residues 808 to 829; the sequence is LALARKKDLDAPADNVPLKAAA.

As to expression, kidney specific. Limited to the basolateral membranes of renal tubular epithelial cells.

It is found in the cell membrane. Functionally, cadherins are calcium-dependent cell adhesion proteins. They preferentially interact with themselves in a homophilic manner in connecting cells; cadherins may thus contribute to the sorting of heterogeneous cell types. The protein is Cadherin-16 (CDH16) of Oryctolagus cuniculus (Rabbit).